The sequence spans 164 residues: C-phycoerythrin class 1 subunit alpha (164 aa).

C82 and C139 together coordinate (2R,3E)-phycoerythrobilin.

This sequence belongs to the phycobiliprotein family. Heterodimer of an alpha and a beta chain. Post-translationally, contains one covalently linked bilin chromophore.

It localises to the cellular thylakoid membrane. Functionally, light-harvesting photosynthetic bile pigment-protein from the phycobiliprotein complex. The sequence is that of C-phycoerythrin class 1 subunit alpha (cpeA) from Synechococcus sp. (strain WH7803).